Here is a 297-residue protein sequence, read N- to C-terminus: uncharacterized protein (297 aa).

The segment at 1 to 29 (MAESKAKNMFQKLSLTPKRNHEHDAGRNI) is disordered. Residues 19-29 (RNHEHDAGRNI) show a composition bias toward basic and acidic residues.

This is an uncharacterized protein from Caenorhabditis elegans.